A 129-amino-acid polypeptide reads, in one-letter code: Prefoldin subunit 6 (129 aa).

Coiled-coil stretches lie at residues 6-26 (VRDL…IQKD) and 84-118 (IEYI…LQQR).

It belongs to the prefoldin subunit beta family. As to quaternary structure, heterohexamer of two PFD-alpha type and four PFD-beta type subunits forming prefoldin co-chaperone complex. Interacts with PFD2, PFD3, PFD4 and PFD5. Interacts with LSM8, a specific subunit of the LSM2-8 complex, which is a core component of the spliceosome. Binds to HSP90 to facilitate the formation of a larger complex made at least of HSP90, PFD6 and LSM8.

It is found in the cytoplasm. The protein localises to the nucleus. In terms of biological role, binds specifically to cytosolic chaperonin (c-CPN) and transfers target proteins to it. Binds to nascent polypeptide chain and promotes folding in an environment in which there are many competing pathways for nonnative proteins. Together with other chaperonins, contribute to the regulation of gene expression by modulating the spliceosome function on pre-mRNA splicing post-transcriptionally by acting as a co-chaperone of Hsp90 to control levels of LSM8. Required for the biogenesis of tubulins and for subsequent microtubules (MTs) organization and dynamicity, but unable to associate with microtubules. Involved in the process leading to microtubules dissociation in response to gibberellic acid (GA) probably due to the DELLA proteins-mediated translocation of the prefoldin co-chaperone complex from the cytoplasm to the nucleus. Contributes to the GA-dependent regulation of PIN2 trafficking at the plasma membrane, thus influencing auxin flux. The protein is Prefoldin subunit 6 of Arabidopsis thaliana (Mouse-ear cress).